Consider the following 141-residue polypeptide: HTH-type transcriptional repressor NsrR (141 aa).

The HTH rrf2-type domain occupies 2–129 (QLTSFTDYGL…DNYTLADLVE (128 aa)). Positions 28–51 (ISQVTEVYGVSRNHMVKIINQLSR) form a DNA-binding region, H-T-H motif. Cys-91, Cys-96, and Cys-102 together coordinate [2Fe-2S] cluster.

It depends on [2Fe-2S] cluster as a cofactor.

In terms of biological role, nitric oxide-sensitive repressor of genes involved in protecting the cell against nitrosative stress. May require iron for activity. This is HTH-type transcriptional repressor NsrR from Enterobacter sp. (strain 638).